The sequence spans 1531 residues: Lysophospholipase nte1 (1531 aa).

Over 1-72 (MATGDGIIAA…TPPAPSTMVG (72 aa)) the chain is Cytoplasmic. A helical membrane pass occupies residues 73 to 93 (WIGWIFSFIFQVIPSVLYWIV). At 94 to 115 (TFTTITLPTWLFTLFSMSLTFT) the chain is on the lumenal side. A helical membrane pass occupies residues 116–136 (MNFTTLLLIALAVVSTISWFI). Over 137 to 1531 (RYRFLNMYSR…RTLAPRRASI (1395 aa)) the chain is Cytoplasmic. 3 disordered regions span residues 242–265 (GSDEELNRMAGESSDEDDHRPDGR), 303–385 (ASSA…TRRK), and 766–789 (NTSSSRVSGSAAAANDPRRKKQSR). Over residues 325–343 (REMDDSPHVYQGDRLDPAS) the composition is skewed to basic and acidic residues. Residues 689–809 (GGTS…AVAS) and 849–969 (RLTS…IAQR) contribute to the a nucleoside 3',5'-cyclic phosphate site. Residues 768–779 (SSSRVSGSAAAA) show a composition bias toward low complexity. The 165-residue stretch at 1228 to 1392 (LVLGGGGARG…IDNLTVDHMK (165 aa)) folds into the PNPLA domain. The GXGXXG signature appears at 1232–1237 (GGGARG). Positions 1259–1263 (GTSIG) match the GXSXG motif. Catalysis depends on Ser1261, which acts as the Nucleophile. Asp1379 serves as the catalytic Proton acceptor. The short motif at 1379 to 1381 (DGG) is the DGA/G element. Positions 1510–1531 (LPEETEEKKKLQRTLAPRRASI) are disordered.

The protein belongs to the NTE family.

It localises to the endoplasmic reticulum membrane. The enzyme catalyses a 1-acyl-sn-glycero-3-phosphocholine + H2O = sn-glycerol 3-phosphocholine + a fatty acid + H(+). Inhibited by organophosphorus esters. Intracellular phospholipase B that catalyzes the double deacylation of phosphatidylcholine (PC) to glycerophosphocholine (GroPCho). Plays an important role in membrane lipid homeostasis. Responsible for the rapid PC turnover in response to inositol, elevated temperatures, or when choline is present in the growth medium. The polypeptide is Lysophospholipase nte1 (nte1) (Aspergillus niger (strain ATCC MYA-4892 / CBS 513.88 / FGSC A1513)).